Here is a 193-residue protein sequence, read N- to C-terminus: MAKLYFYYASMNAGKSTNLLQADFNYRERGMQTLLFTAGIDTRYKQGVIKSRIGLEAPAIAFFEESSLWDIIQEQHVKNPLHCILIDEAQFLNKNQVFELARVCDDLNIPVLCYGLRTDFQAELFEGSKYLLAIADKLAEIKSVCFCGAKATMNLRVDENKKPIRHGQQTEIGGNERYIALCRRHFIEKLNSL.

ATP is bound by residues 9–16 (ASMNAGKS) and 87–90 (DEAQ). E88 serves as the catalytic Proton acceptor. Positions 145, 147, 182, and 185 each coordinate Zn(2+).

The protein belongs to the thymidine kinase family. In terms of assembly, homotetramer.

The protein localises to the cytoplasm. The catalysed reaction is thymidine + ATP = dTMP + ADP + H(+). This is Thymidine kinase from Zymomonas mobilis subsp. mobilis (strain ATCC 31821 / ZM4 / CP4).